Reading from the N-terminus, the 380-residue chain is Cytochrome b (380 aa).

4 helical membrane-spanning segments follow: residues phenylalanine 34–methionine 54, tryptophan 78–isoleucine 99, tryptophan 114–leucine 134, and phenylalanine 179–threonine 199. Heme b-binding residues include histidine 84 and histidine 98. Positions 183 and 197 each coordinate heme b. Position 202 (histidine 202) interacts with a ubiquinone. The next 4 membrane-spanning stretches (helical) occupy residues threonine 227–serine 247, leucine 289–histidine 309, leucine 321–serine 341, and phenylalanine 348–proline 368.

The protein belongs to the cytochrome b family. In terms of assembly, the cytochrome bc1 complex contains 11 subunits: 3 respiratory subunits (MT-CYB, CYC1 and UQCRFS1), 2 core proteins (UQCRC1 and UQCRC2) and 6 low-molecular weight proteins (UQCRH/QCR6, UQCRB/QCR7, UQCRQ/QCR8, UQCR10/QCR9, UQCR11/QCR10 and a cleavage product of UQCRFS1). This cytochrome bc1 complex then forms a dimer. Heme b is required as a cofactor.

Its subcellular location is the mitochondrion inner membrane. In terms of biological role, component of the ubiquinol-cytochrome c reductase complex (complex III or cytochrome b-c1 complex) that is part of the mitochondrial respiratory chain. The b-c1 complex mediates electron transfer from ubiquinol to cytochrome c. Contributes to the generation of a proton gradient across the mitochondrial membrane that is then used for ATP synthesis. The sequence is that of Cytochrome b (MT-CYB) from Aerodramus vulcanorum (Volcano swiftlet).